Reading from the N-terminus, the 736-residue chain is Polyribonucleotide nucleotidyltransferase (736 aa).

The Mg(2+) site is built by aspartate 488 and aspartate 494. Residues 555-614 form the KH domain; it reads PMVQTLEIQKEKIRDVIGLGGKVIKELCKTFDVEIDISENGEVKVWGNVGENVKKAVQSI. Positions 624 to 692 constitute an S1 motif domain; the sequence is GDIFDGEVVK…HKNRVKLTLR (69 aa).

It belongs to the polyribonucleotide nucleotidyltransferase family. Mg(2+) is required as a cofactor.

The protein localises to the cytoplasm. The enzyme catalyses RNA(n+1) + phosphate = RNA(n) + a ribonucleoside 5'-diphosphate. Functionally, involved in mRNA degradation. Catalyzes the phosphorolysis of single-stranded polyribonucleotides processively in the 3'- to 5'-direction. This Orientia tsutsugamushi (strain Ikeda) (Rickettsia tsutsugamushi) protein is Polyribonucleotide nucleotidyltransferase.